The primary structure comprises 150 residues: uncharacterized protein (150 aa).

Residues 1–39 (MKQRFSQVATVIFFVMSIRSPRNLGFFFTLALFVVLVCS) form the signal peptide.

This is an uncharacterized protein from Saccharomyces cerevisiae (strain ATCC 204508 / S288c) (Baker's yeast).